We begin with the raw amino-acid sequence, 657 residues long: Methionine--tRNA ligase (657 aa).

Residues Y13–H23 carry the 'HIGH' region motif. Residues K308–S312 carry the 'KMSKS' region motif. K311 provides a ligand contact to ATP. The tRNA-binding domain maps to D557–K657.

Belongs to the class-I aminoacyl-tRNA synthetase family. MetG type 2B subfamily. As to quaternary structure, homodimer.

It localises to the cytoplasm. It catalyses the reaction tRNA(Met) + L-methionine + ATP = L-methionyl-tRNA(Met) + AMP + diphosphate. Is required not only for elongation of protein synthesis but also for the initiation of all mRNA translation through initiator tRNA(fMet) aminoacylation. This is Methionine--tRNA ligase from Staphylococcus aureus (strain COL).